The following is a 468-amino-acid chain: Glutamate--tRNA ligase 2 (468 aa).

A 'HIGH' region motif is present at residues Pro-9 to Gly-19. Residues Lys-238–Arg-242 carry the 'KMSKS' region motif. Lys-241 serves as a coordination point for ATP.

It belongs to the class-I aminoacyl-tRNA synthetase family. Glutamate--tRNA ligase type 1 subfamily. Monomer.

The protein resides in the cytoplasm. The enzyme catalyses tRNA(Glu) + L-glutamate + ATP = L-glutamyl-tRNA(Glu) + AMP + diphosphate. Catalyzes the attachment of glutamate to tRNA(Glu) in a two-step reaction: glutamate is first activated by ATP to form Glu-AMP and then transferred to the acceptor end of tRNA(Glu). In Rhodospirillum centenum (strain ATCC 51521 / SW), this protein is Glutamate--tRNA ligase 2.